We begin with the raw amino-acid sequence, 121 residues long: MNAQEIIRSIEAEQMKTQLPVLHIGDTVKVNVRIREGGKERIQAFEGTIISMARAGINRTVTVRRIFQGIGVERVFLVHSPRIESMTVTRLGKVRRAKLYYLRDRIGKATRVKQKITRKAN.

Belongs to the bacterial ribosomal protein bL19 family.

This protein is located at the 30S-50S ribosomal subunit interface and may play a role in the structure and function of the aminoacyl-tRNA binding site. The polypeptide is Large ribosomal subunit protein bL19 (Gloeobacter violaceus (strain ATCC 29082 / PCC 7421)).